Reading from the N-terminus, the 284-residue chain is Nucleotide-binding protein VF_0384 (284 aa).

8–15 (GSSGAGKS) contributes to the ATP binding site. 56-59 (DIRN) contributes to the GTP binding site.

This sequence belongs to the RapZ-like family.

Displays ATPase and GTPase activities. This Aliivibrio fischeri (strain ATCC 700601 / ES114) (Vibrio fischeri) protein is Nucleotide-binding protein VF_0384.